A 409-amino-acid chain; its full sequence is MREEFLEEIPLDAPPEEAKELRTEVMTLNVGPQHPSTHGVLRLMVTLSGEEVLEVVPHIGYLHTGFEKTMEHRTYLQNITYTPRMDYLHSFAHDLAYALAVEKLLGAVVPPRAETIRVILNELSRLASHLVFLGTGLLDLGALTPFFYAFRERETILDLFEWVTGQRFHHNYIRIGGVKEDLPEEFVPELKKFLEVMPHRIDEYEALFAESPIFYERARGVGVIPPEVAIDLGLTGGSLRASGVNYDVRKAYPYSGYETYTFDVPLGERGDVFDRMLVRIREMRESVKIIKQALERLEPGPVRDPNPQITPPPRHLLETSMEAVIYHFKHYTEGFHPPKGEVYVPTESARGELGYYIVSDGGSMPYRVKVRAPSFVNLQSLPYACKGEQVPDMVAIIASLDPVMGDVDR.

The protein belongs to the complex I 49 kDa subunit family. As to quaternary structure, NDH-1 is composed of 14 different subunits. Subunits NuoB, C, D, E, F, and G constitute the peripheral sector of the complex.

The protein resides in the cell inner membrane. It catalyses the reaction a quinone + NADH + 5 H(+)(in) = a quinol + NAD(+) + 4 H(+)(out). Its function is as follows. NDH-1 shuttles electrons from NADH, via FMN and iron-sulfur (Fe-S) centers, to quinones in the respiratory chain. The immediate electron acceptor for the enzyme in this species is believed to be ubiquinone. Couples the redox reaction to proton translocation (for every two electrons transferred, four hydrogen ions are translocated across the cytoplasmic membrane), and thus conserves the redox energy in a proton gradient. This Thermus thermophilus (strain ATCC BAA-163 / DSM 7039 / HB27) protein is NADH-quinone oxidoreductase subunit D (nuoD).